The sequence spans 307 residues: Ribosomal RNA small subunit methyltransferase H (307 aa).

Residues 32 to 34 (GGH), Asp-52, Phe-78, Asp-99, and Gln-106 each bind S-adenosyl-L-methionine.

Belongs to the methyltransferase superfamily. RsmH family.

Its subcellular location is the cytoplasm. It catalyses the reaction cytidine(1402) in 16S rRNA + S-adenosyl-L-methionine = N(4)-methylcytidine(1402) in 16S rRNA + S-adenosyl-L-homocysteine + H(+). Specifically methylates the N4 position of cytidine in position 1402 (C1402) of 16S rRNA. The polypeptide is Ribosomal RNA small subunit methyltransferase H (Acinetobacter baumannii (strain AB307-0294)).